We begin with the raw amino-acid sequence, 764 residues long: Probable glutamate--tRNA ligase, cytoplasmic (764 aa).

228-230 (RFP) contacts L-glutamate. Residues 233–242 (PSGYMHIGHC) carry the 'HIGH' region motif. His238 contacts ATP. L-glutamate-binding positions include Asp264, 404–408 (YDFAC), and Arg422. ATP contacts are provided by residues Glu425 and 460 to 464 (LLSKR). The 'KMSKS' region motif lies at 460–464 (LLSKR).

Belongs to the class-I aminoacyl-tRNA synthetase family. Glutamate--tRNA ligase type 2 subfamily.

Its subcellular location is the cytoplasm. The enzyme catalyses tRNA(Glu) + L-glutamate + ATP = L-glutamyl-tRNA(Glu) + AMP + diphosphate. In terms of biological role, catalyzes the attachment of glutamate to tRNA(Glu) in a two-step reaction: glutamate is first activated by ATP to form Glu-AMP and then transferred to the acceptor end of tRNA(Glu). This is Probable glutamate--tRNA ligase, cytoplasmic (gluS) from Dictyostelium discoideum (Social amoeba).